We begin with the raw amino-acid sequence, 181 residues long: Trafficking protein particle complex subunit 3-like protein (181 aa).

A lipid anchor (S-palmitoyl cysteine) is attached at Cys68.

Belongs to the TRAPP small subunits family. BET3 subfamily. Homodimer. Component of the multisubunit TRAPP (transport protein particle) complex, which includes at least TRAPPC2, TRAPPC2L, TRAPPC3, TRAPPC3L, TRAPPC4, TRAPPC5, TRAPPC8, TRAPPC9, TRAPPC10, TRAPPC11 and TRAPPC12.

Its subcellular location is the golgi apparatus. The protein localises to the cis-Golgi network. The protein resides in the endoplasmic reticulum. In terms of biological role, may play a role in vesicular transport from endoplasmic reticulum to Golgi. The sequence is that of Trafficking protein particle complex subunit 3-like protein (TRAPPC3L) from Homo sapiens (Human).